A 337-amino-acid chain; its full sequence is NADH-quinone oxidoreductase subunit H (337 aa).

9 helical membrane passes run 9–29 (GIPLAIIAAQSLALIVALLLV), 50–70 (PNVVGAFGLLQSFADLLKFVF), 82–102 (GIFLLAPLVTVVLALSGWAVI), 115–135 (VGILYIFAISSLGVYGVIMAG), 161–181 (IGFVIVCVLMTAGSLNLTAIV), 186–206 (TIWYFIPHLPMFVIFFISALA), 245–265 (SILLMCAMTTILFLGGWLPPI), 273–293 (VPGVIWFLLKVFLVFFMFAMV), and 313–333 (FLPISLFWVVLTAGVLVGFDI).

It belongs to the complex I subunit 1 family. In terms of assembly, NDH-1 is composed of 14 different subunits. Subunits NuoA, H, J, K, L, M, N constitute the membrane sector of the complex.

Its subcellular location is the cell inner membrane. The enzyme catalyses a quinone + NADH + 5 H(+)(in) = a quinol + NAD(+) + 4 H(+)(out). Its function is as follows. NDH-1 shuttles electrons from NADH, via FMN and iron-sulfur (Fe-S) centers, to quinones in the respiratory chain. The immediate electron acceptor for the enzyme in this species is believed to be ubiquinone. Couples the redox reaction to proton translocation (for every two electrons transferred, four hydrogen ions are translocated across the cytoplasmic membrane), and thus conserves the redox energy in a proton gradient. This subunit may bind ubiquinone. The polypeptide is NADH-quinone oxidoreductase subunit H (Parvibaculum lavamentivorans (strain DS-1 / DSM 13023 / NCIMB 13966)).